The chain runs to 249 residues: 2-C-methyl-D-erythritol 4-phosphate cytidylyltransferase (249 aa).

Belongs to the IspD/TarI cytidylyltransferase family. IspD subfamily.

The catalysed reaction is 2-C-methyl-D-erythritol 4-phosphate + CTP + H(+) = 4-CDP-2-C-methyl-D-erythritol + diphosphate. The protein operates within isoprenoid biosynthesis; isopentenyl diphosphate biosynthesis via DXP pathway; isopentenyl diphosphate from 1-deoxy-D-xylulose 5-phosphate: step 2/6. Functionally, catalyzes the formation of 4-diphosphocytidyl-2-C-methyl-D-erythritol from CTP and 2-C-methyl-D-erythritol 4-phosphate (MEP). In Chromohalobacter salexigens (strain ATCC BAA-138 / DSM 3043 / CIP 106854 / NCIMB 13768 / 1H11), this protein is 2-C-methyl-D-erythritol 4-phosphate cytidylyltransferase.